We begin with the raw amino-acid sequence, 186 residues long: Adenine phosphoribosyltransferase (186 aa).

Position 132-136 (132-136 (ATGGS)) interacts with AMP.

The protein belongs to the purine/pyrimidine phosphoribosyltransferase family. As to quaternary structure, homodimer. It depends on Mg(2+) as a cofactor.

It is found in the cytoplasm. Its subcellular location is the nucleus. It carries out the reaction AMP + diphosphate = 5-phospho-alpha-D-ribose 1-diphosphate + adenine. The protein operates within purine metabolism; AMP biosynthesis via salvage pathway; AMP from adenine: step 1/1. Functionally, catalyzes a salvage reaction resulting in the formation of AMP, that is energically less costly than de novo synthesis. In Debaryomyces hansenii (strain ATCC 36239 / CBS 767 / BCRC 21394 / JCM 1990 / NBRC 0083 / IGC 2968) (Yeast), this protein is Adenine phosphoribosyltransferase (APT1).